Consider the following 480-residue polypeptide: ATP synthase subunit beta (480 aa).

Residue 152–159 participates in ATP binding; that stretch reads GGAGVGKT.

The protein belongs to the ATPase alpha/beta chains family. In terms of assembly, F-type ATPases have 2 components, CF(1) - the catalytic core - and CF(0) - the membrane proton channel. CF(1) has five subunits: alpha(3), beta(3), gamma(1), delta(1), epsilon(1). CF(0) has three main subunits: a(1), b(2) and c(9-12). The alpha and beta chains form an alternating ring which encloses part of the gamma chain. CF(1) is attached to CF(0) by a central stalk formed by the gamma and epsilon chains, while a peripheral stalk is formed by the delta and b chains.

The protein resides in the cell membrane. The catalysed reaction is ATP + H2O + 4 H(+)(in) = ADP + phosphate + 5 H(+)(out). Functionally, produces ATP from ADP in the presence of a proton gradient across the membrane. The catalytic sites are hosted primarily by the beta subunits. The chain is ATP synthase subunit beta from Wolbachia sp. subsp. Brugia malayi (strain TRS).